Consider the following 228-residue polypeptide: GDT1-like protein 5 (228 aa).

N-acetylglycine is present on G2. 6 consecutive transmembrane segments (helical) span residues 12-32, 39-59, 71-91, 133-153, 173-193, and 205-225; these read LAMT…AILA, LVLA…ATLG, THHI…WDGF, PFLT…NFFG, LGVV…AVLG, and IVAL…LLTP.

The protein belongs to the GDT1 family.

It localises to the membrane. The chain is GDT1-like protein 5 from Arabidopsis thaliana (Mouse-ear cress).